A 216-amino-acid chain; its full sequence is 3-isopropylmalate dehydratase small subunit (216 aa).

The protein belongs to the LeuD family. LeuD type 1 subfamily. Heterodimer of LeuC and LeuD.

The catalysed reaction is (2R,3S)-3-isopropylmalate = (2S)-2-isopropylmalate. The protein operates within amino-acid biosynthesis; L-leucine biosynthesis; L-leucine from 3-methyl-2-oxobutanoate: step 2/4. Functionally, catalyzes the isomerization between 2-isopropylmalate and 3-isopropylmalate, via the formation of 2-isopropylmaleate. In Marinomonas sp. (strain MWYL1), this protein is 3-isopropylmalate dehydratase small subunit.